Consider the following 225-residue polypeptide: Receptor-transporting protein 2 (225 aa).

The Cytoplasmic segment spans residues 1-196 (MCTSLTTCEW…RAQAGSGYNF (196 aa)). The 3CxxC-type zinc finger occupies 52–161 (ASGRFHCSWC…AEFCEACQEG (110 aa)). Residues 197 to 219 (LSLRWCLFWASLCLLVVYLQFSF) form a helical membrane-spanning segment. The Extracellular portion of the chain corresponds to 220 to 225 (LSPAFF).

Belongs to the TMEM7 family. Interacts with olfactory receptors. As to expression, expressed in circumvallate papillae and testis.

Its subcellular location is the cell membrane. Specifically promotes functional cell surface expression of olfactory receptors, but not of other GPCRs. This chain is Receptor-transporting protein 2 (RTP2), found in Homo sapiens (Human).